The sequence spans 90 residues: Acylphosphatase (90 aa).

Residues 4-90 enclose the Acylphosphatase-like domain; sequence CVRVRVSGRV…KGHDDFKIIY (87 aa). Active-site residues include R19 and N37.

This sequence belongs to the acylphosphatase family.

The enzyme catalyses an acyl phosphate + H2O = a carboxylate + phosphate + H(+). The polypeptide is Acylphosphatase (acyP) (Methanothrix thermoacetophila (strain DSM 6194 / JCM 14653 / NBRC 101360 / PT) (Methanosaeta thermophila)).